The sequence spans 208 residues: Uracil phosphoribosyltransferase (208 aa).

5-phospho-alpha-D-ribose 1-diphosphate contacts are provided by residues R78, R103, and 130–138 (DPMFATGGT). Residues I193 and 198–200 (GDA) contribute to the uracil site. D199 lines the 5-phospho-alpha-D-ribose 1-diphosphate pocket.

The protein belongs to the UPRTase family. Requires Mg(2+) as cofactor.

It carries out the reaction UMP + diphosphate = 5-phospho-alpha-D-ribose 1-diphosphate + uracil. Its pathway is pyrimidine metabolism; UMP biosynthesis via salvage pathway; UMP from uracil: step 1/1. Its activity is regulated as follows. Allosterically activated by GTP. In terms of biological role, catalyzes the conversion of uracil and 5-phospho-alpha-D-ribose 1-diphosphate (PRPP) to UMP and diphosphate. In Campylobacter curvus (strain 525.92), this protein is Uracil phosphoribosyltransferase.